We begin with the raw amino-acid sequence, 294 residues long: Ribosomal RNA small subunit methyltransferase H (294 aa).

S-adenosyl-L-methionine-binding positions include 40–42 (GGH), aspartate 59, phenylalanine 86, aspartate 102, and glutamine 109.

This sequence belongs to the methyltransferase superfamily. RsmH family.

Its subcellular location is the cytoplasm. It catalyses the reaction cytidine(1402) in 16S rRNA + S-adenosyl-L-methionine = N(4)-methylcytidine(1402) in 16S rRNA + S-adenosyl-L-homocysteine + H(+). Specifically methylates the N4 position of cytidine in position 1402 (C1402) of 16S rRNA. In Cyanothece sp. (strain PCC 7425 / ATCC 29141), this protein is Ribosomal RNA small subunit methyltransferase H.